The sequence spans 44 residues: Mu-conotoxin-like Cal 12.1.2h (44 aa).

4 disulfides stabilise this stretch: C3–C16, C11–C28, C18–C33, and C27–C38. W17 bears the 6'-bromotryptophan mark. At P23 the chain carries 4-hydroxyproline. Residues W36 and W37 each carry the 6'-bromotryptophan modification. P39 bears the 4-hydroxyproline mark. W43 bears the 6'-bromotryptophan mark.

In terms of tissue distribution, expressed by the venom duct.

It localises to the secreted. Functionally, mu-conotoxins block voltage-gated sodium channels. This toxin reversibly blocks voltage-gated sodium channel in cephalopods, with no alteration in the voltage dependence of sodium conductance or on the kinetics of inactivation. This is Mu-conotoxin-like Cal 12.1.2h from Californiconus californicus (California cone).